A 336-amino-acid chain; its full sequence is Holliday junction branch migration complex subunit RuvB (336 aa).

Residues 1-182 (MKERIVNLET…FGMSFRMQFY (182 aa)) are large ATPase domain (RuvB-L). ATP is bound by residues L21, R22, G63, K66, T67, S68, 129 to 131 (EDF), R172, Y182, and R219. A Mg(2+)-binding site is contributed by T67. The tract at residues 183–253 (NPSELALIIK…ITLHALNELG (71 aa)) is small ATPAse domain (RuvB-S). Residues 256–336 (ELGFDEADLA…IPTLNPQTLF (81 aa)) form a head domain (RuvB-H) region. 2 residues coordinate DNA: R310 and R315.

It belongs to the RuvB family. As to quaternary structure, homohexamer. Forms an RuvA(8)-RuvB(12)-Holliday junction (HJ) complex. HJ DNA is sandwiched between 2 RuvA tetramers; dsDNA enters through RuvA and exits via RuvB. An RuvB hexamer assembles on each DNA strand where it exits the tetramer. Each RuvB hexamer is contacted by two RuvA subunits (via domain III) on 2 adjacent RuvB subunits; this complex drives branch migration. In the full resolvosome a probable DNA-RuvA(4)-RuvB(12)-RuvC(2) complex forms which resolves the HJ.

It localises to the cytoplasm. It catalyses the reaction ATP + H2O = ADP + phosphate + H(+). In terms of biological role, the RuvA-RuvB-RuvC complex processes Holliday junction (HJ) DNA during genetic recombination and DNA repair, while the RuvA-RuvB complex plays an important role in the rescue of blocked DNA replication forks via replication fork reversal (RFR). RuvA specifically binds to HJ cruciform DNA, conferring on it an open structure. The RuvB hexamer acts as an ATP-dependent pump, pulling dsDNA into and through the RuvAB complex. RuvB forms 2 homohexamers on either side of HJ DNA bound by 1 or 2 RuvA tetramers; 4 subunits per hexamer contact DNA at a time. Coordinated motions by a converter formed by DNA-disengaged RuvB subunits stimulates ATP hydrolysis and nucleotide exchange. Immobilization of the converter enables RuvB to convert the ATP-contained energy into a lever motion, pulling 2 nucleotides of DNA out of the RuvA tetramer per ATP hydrolyzed, thus driving DNA branch migration. The RuvB motors rotate together with the DNA substrate, which together with the progressing nucleotide cycle form the mechanistic basis for DNA recombination by continuous HJ branch migration. Branch migration allows RuvC to scan DNA until it finds its consensus sequence, where it cleaves and resolves cruciform DNA. This Helicobacter pylori (strain ATCC 700392 / 26695) (Campylobacter pylori) protein is Holliday junction branch migration complex subunit RuvB.